Here is a 101-residue protein sequence, read N- to C-terminus: Small ribosomal subunit protein uS14 (101 aa).

The protein belongs to the universal ribosomal protein uS14 family. Part of the 30S ribosomal subunit. Contacts proteins S3 and S10.

Functionally, binds 16S rRNA, required for the assembly of 30S particles and may also be responsible for determining the conformation of the 16S rRNA at the A site. The sequence is that of Small ribosomal subunit protein uS14 from Opitutus terrae (strain DSM 11246 / JCM 15787 / PB90-1).